The following is a 695-amino-acid chain: Lactotransferrin (695 aa).

Positions 1–6 (LGLCLA) are cleaved as a signal peptide. Transferrin-like domains follow at residues 12-339 (VRWC…NLRE) and 351-680 (VVWC…NLRR). 2 cysteine pairs are disulfide-bonded: C15-C51 and C25-C42. D66 is a binding site for Fe(3+). The active site involves K79. Y98 provides a ligand contact to Fe(3+). 5 disulfides stabilise this stretch: C121–C204, C163–C179, C166–C189, C176–C187, and C237–C251. Hydrogencarbonate-binding residues include T123, R127, A129, and G130. An N-linked (GlcNAc...) asparagine glycan is attached at N143. Y198 contributes to the Fe(3+) binding site. Fe(3+) is bound at residue H259. S265 (nucleophile) is an active-site residue. A glycan (N-linked (GlcNAc...) asparagine) is linked at N287. Intrachain disulfides connect C354–C386 and C364–C377. D401 lines the Fe(3+) pocket. 8 disulfides stabilise this stretch: C411/C690, C431/C653, C463/C538, C487/C681, C497/C511, C508/C521, C579/C593, and C631/C636. D-glucose is bound at residue P436. Y439 lines the Fe(3+) pocket. Positions 465, 469, 471, and 472 each coordinate hydrogencarbonate. A glycan (N-linked (GlcNAc...) asparagine) is linked at N482. Y532 is a Fe(3+) binding site. N600 is a D-glucose binding site. H601 serves as a coordination point for Fe(3+). Y666 contacts D-glucose.

This sequence belongs to the transferrin family. In terms of assembly, monomer. Found in a complex with LTF, CLU, EPPIN and SEMG1. Found in a complex with MPO and LTF; interacts directly with CP, allows Fe(3+) incorporation into LTF and activation of CP ferroxidase activity. In terms of processing, poly-N-acetyllactosaminic carbohydrate moiety seems to be needed for TLR4 activation.

The protein localises to the secreted. The protein resides in the cytoplasmic granule. Its function is as follows. Transferrins are iron binding transport proteins which can bind two Fe(3+) ions in association with the binding of an anion, usually bicarbonate. Major iron-binding and multifunctional protein found in exocrine fluids such as breast milk and mucosal secretions. Has antimicrobial activity, which depends on the extracellular cation concentration. Antimicrobial properties include bacteriostasis, which is related to its ability to sequester free iron and thus inhibit microbial growth, as well as direct bactericidal properties leading to the release of lipopolysaccharides from the bacterial outer membrane. Can also prevent bacterial biofilm development in P.aeruginosa infection. Has weak antifungal activity against C.albicans. Has anabolic, differentiating and anti-apoptotic effects on osteoblasts and can also inhibit osteoclastogenesis, possibly playing a role in the regulation of bone growth. Promotes binding of species C adenoviruses to epithelial cells, promoting adenovirus infection. Can inhibit papillomavirus infections. Stimulates the TLR4 signaling pathway leading to NF-kappa-B activation and subsequent pro-inflammatory cytokine production while also interfering with the lipopolysaccharide (LPS)-stimulated TLR4 signaling. Inhibits neutrophil granulocyte migration to sites of apoptosis, when secreted by apoptotic cells. Stimulates VEGFA-mediated endothelial cell migration and proliferation. Binds heparin, chondroitin sulfate and possibly other glycosaminoglycans (GAGs). Also binds specifically to pneumococcal surface protein A (PspA), the lipid A portion of bacterial lipopolysaccharide (LPS), lysozyme and DNA. Functionally, lactoferricin binds to the bacterial surface and is crucial for the bactericidal functions. Has some antiviral activity against papillomavirus infection. N-terminal region shows strong antifungal activity against C.albicans. Contains two BBXB heparin-binding consensus sequences that appear to form the predominate functional GAG-binding site. In terms of biological role, the lactotransferrin transferrin-like domain 1 functions as a serine protease of the peptidase S60 family that cuts arginine rich regions. This function contributes to the antimicrobial activity. Shows a preferential cleavage at -Arg-Ser-Arg-Arg-|- and -Arg-Arg-Ser-Arg-|-, and of Z-Phe-Arg-|-aminomethylcoumarin sites. In Equus caballus (Horse), this protein is Lactotransferrin (LTF).